Reading from the N-terminus, the 364-residue chain is MEQNTDNVFNFSAGPAALPKPVMQQAQQELLNWQGLGTSVMEISHRSKEFIAVAEQSEQDLRDLLNIPDNYKVLFCQGGARAQFAAVPLNLLGDATTATYIDAGYWAESAVEEAKKYCQPDVFVAKAEKDGKQAVLPASEWQIHPDAAYVHFCPNETIDGIEINDLPVTDKPIVADMSSTILSREIDVSKYGVIYAGAQKNIGPSGIAIAIVRDDLLGLAKEVLPSILNYKVLAEQDSMFNTPPTFAWYLSGLVFKWLKAQGGVKAIEQVNREKAAILYNYIDESDFYINNVHPDNRSLMNVPFQMVKPELDAKFLKEAEALGLKSLKGHRVVGGMRASIYNAMPIEGVKALVDFMRQFEQENA.

L-glutamate is bound at residue Arg-46. Residues 80–81, Trp-106, Thr-157, Asp-176, and Gln-199 contribute to the pyridoxal 5'-phosphate site; that span reads AR. Lys-200 is modified (N6-(pyridoxal phosphate)lysine). 241–242 contributes to the pyridoxal 5'-phosphate binding site; the sequence is NT.

This sequence belongs to the class-V pyridoxal-phosphate-dependent aminotransferase family. SerC subfamily. In terms of assembly, homodimer. The cofactor is pyridoxal 5'-phosphate.

It is found in the cytoplasm. The catalysed reaction is O-phospho-L-serine + 2-oxoglutarate = 3-phosphooxypyruvate + L-glutamate. The enzyme catalyses 4-(phosphooxy)-L-threonine + 2-oxoglutarate = (R)-3-hydroxy-2-oxo-4-phosphooxybutanoate + L-glutamate. The protein operates within amino-acid biosynthesis; L-serine biosynthesis; L-serine from 3-phospho-D-glycerate: step 2/3. It functions in the pathway cofactor biosynthesis; pyridoxine 5'-phosphate biosynthesis; pyridoxine 5'-phosphate from D-erythrose 4-phosphate: step 3/5. Functionally, catalyzes the reversible conversion of 3-phosphohydroxypyruvate to phosphoserine and of 3-hydroxy-2-oxo-4-phosphonooxybutanoate to phosphohydroxythreonine. This Vibrio vulnificus (strain YJ016) protein is Phosphoserine aminotransferase.